We begin with the raw amino-acid sequence, 256 residues long: Thiazole synthase (256 aa).

Lysine 95 functions as the Schiff-base intermediate with DXP in the catalytic mechanism. 1-deoxy-D-xylulose 5-phosphate-binding positions include glycine 156, alanine 182 to glycine 183, and asparagine 204 to threonine 205.

Belongs to the ThiG family. Homotetramer. Forms heterodimers with either ThiH or ThiS.

The protein localises to the cytoplasm. The catalysed reaction is [ThiS sulfur-carrier protein]-C-terminal-Gly-aminoethanethioate + 2-iminoacetate + 1-deoxy-D-xylulose 5-phosphate = [ThiS sulfur-carrier protein]-C-terminal Gly-Gly + 2-[(2R,5Z)-2-carboxy-4-methylthiazol-5(2H)-ylidene]ethyl phosphate + 2 H2O + H(+). The protein operates within cofactor biosynthesis; thiamine diphosphate biosynthesis. Catalyzes the rearrangement of 1-deoxy-D-xylulose 5-phosphate (DXP) to produce the thiazole phosphate moiety of thiamine. Sulfur is provided by the thiocarboxylate moiety of the carrier protein ThiS. In vitro, sulfur can be provided by H(2)S. This Salmonella paratyphi A (strain ATCC 9150 / SARB42) protein is Thiazole synthase.